The following is a 187-amino-acid chain: Elongation factor P (187 aa).

The protein belongs to the elongation factor P family.

It localises to the cytoplasm. Its pathway is protein biosynthesis; polypeptide chain elongation. Functionally, involved in peptide bond synthesis. Stimulates efficient translation and peptide-bond synthesis on native or reconstituted 70S ribosomes in vitro. Probably functions indirectly by altering the affinity of the ribosome for aminoacyl-tRNA, thus increasing their reactivity as acceptors for peptidyl transferase. In Roseiflexus castenholzii (strain DSM 13941 / HLO8), this protein is Elongation factor P.